The sequence spans 501 residues: Glutamate--tRNA ligase (501 aa).

The 'HIGH' region motif lies at 11–21 (PSPTGPLHIGG). A 'KMSKS' region motif is present at residues 260–264 (KLSKR). Lys263 contributes to the ATP binding site.

It belongs to the class-I aminoacyl-tRNA synthetase family. Glutamate--tRNA ligase type 1 subfamily. In terms of assembly, monomer.

The protein localises to the cytoplasm. The enzyme catalyses tRNA(Glu) + L-glutamate + ATP = L-glutamyl-tRNA(Glu) + AMP + diphosphate. Functionally, catalyzes the attachment of glutamate to tRNA(Glu) in a two-step reaction: glutamate is first activated by ATP to form Glu-AMP and then transferred to the acceptor end of tRNA(Glu). This Flavobacterium johnsoniae (strain ATCC 17061 / DSM 2064 / JCM 8514 / BCRC 14874 / CCUG 350202 / NBRC 14942 / NCIMB 11054 / UW101) (Cytophaga johnsonae) protein is Glutamate--tRNA ligase.